Consider the following 473-residue polypeptide: Proline--tRNA ligase (473 aa).

This sequence belongs to the class-II aminoacyl-tRNA synthetase family. ProS type 3 subfamily. Homodimer.

The protein resides in the cytoplasm. The enzyme catalyses tRNA(Pro) + L-proline + ATP = L-prolyl-tRNA(Pro) + AMP + diphosphate. Functionally, catalyzes the attachment of proline to tRNA(Pro) in a two-step reaction: proline is first activated by ATP to form Pro-AMP and then transferred to the acceptor end of tRNA(Pro). The polypeptide is Proline--tRNA ligase (Mesoplasma florum (strain ATCC 33453 / NBRC 100688 / NCTC 11704 / L1) (Acholeplasma florum)).